Consider the following 377-residue polypeptide: MKEKVVSLAQDLIRRPSISPNDEGCQQIIAEGLEKLGFQIEWMPFNDTLNLWAKHGTSEPVIAFVGHTDVVPTGDENQWSSPPFSAEIIDGILYGRGAADMKGSLAAMIVAAEEYVKANPNHKGTIALLITSDEEAAAKDGTIRVVETLMTRDEKITYCMVGEPSSAKNLGDVVKNGRRGSITGNLYIQGIQGHVAYPHLAENPIHKAAPFLQELTTYQWDKGNEFFPPTSLQIANIHAGTGSNNVIPAELYIQFNLRYCTEVTDEIIKQKVAEMLAKHNLKYRIEWNLSGKPFLTKPGKLLDSITSAIEEITGITPKAETGGGTSDGRFIALMGAEVVEFGPLNSSIHKVNECVSVEDLGKCGEIYHKMLVNLLDS.

His67 provides a ligand contact to Zn(2+). Asp69 is an active-site residue. Zn(2+) is bound at residue Asp100. Glu134 functions as the Proton acceptor in the catalytic mechanism. Zn(2+) contacts are provided by Glu135, Glu163, and His349.

The protein belongs to the peptidase M20A family. DapE subfamily. Homodimer. Zn(2+) is required as a cofactor. It depends on Co(2+) as a cofactor.

The catalysed reaction is N-succinyl-(2S,6S)-2,6-diaminopimelate + H2O = (2S,6S)-2,6-diaminopimelate + succinate. The protein operates within amino-acid biosynthesis; L-lysine biosynthesis via DAP pathway; LL-2,6-diaminopimelate from (S)-tetrahydrodipicolinate (succinylase route): step 3/3. Functionally, catalyzes the hydrolysis of N-succinyl-L,L-diaminopimelic acid (SDAP), forming succinate and LL-2,6-diaminopimelate (DAP), an intermediate involved in the bacterial biosynthesis of lysine and meso-diaminopimelic acid, an essential component of bacterial cell walls. This is Succinyl-diaminopimelate desuccinylase from Haemophilus influenzae (strain PittEE).